Here is a 100-residue protein sequence, read N- to C-terminus: Small ribosomal subunit protein uS14c (100 aa).

It belongs to the universal ribosomal protein uS14 family. Part of the 30S ribosomal subunit.

It is found in the plastid. It localises to the chloroplast. Functionally, binds 16S rRNA, required for the assembly of 30S particles. This chain is Small ribosomal subunit protein uS14c, found in Crucihimalaya wallichii (Rock-cress).